The following is a 133-amino-acid chain: Small ribosomal subunit protein uS8 (133 aa).

It belongs to the universal ribosomal protein uS8 family. Part of the 30S ribosomal subunit. Contacts proteins S5 and S12.

One of the primary rRNA binding proteins, it binds directly to 16S rRNA central domain where it helps coordinate assembly of the platform of the 30S subunit. This is Small ribosomal subunit protein uS8 from Crocosphaera subtropica (strain ATCC 51142 / BH68) (Cyanothece sp. (strain ATCC 51142)).